The chain runs to 20 residues: Beta-1,3-glucan-binding protein 2 (20 aa).

It belongs to the insect beta-1,3-glucan binding protein family. In terms of assembly, monomer.

Its subcellular location is the secreted. Functionally, involved in the recognition of invading microorganisms causing their aggregation. Activates the phenoloxidase cascade. Binds specifically to beta-1,3-glucan. Binds the A.niger cell wall component alpha-1,3-glucan, a fungal pathogen-associated molecular pattern (PAMP) that activates the host immune response. This chain is Beta-1,3-glucan-binding protein 2, found in Galleria mellonella (Greater wax moth).